We begin with the raw amino-acid sequence, 465 residues long: Putative multidrug resistance protein MdtD (465 aa).

12 consecutive transmembrane segments (helical) span residues 12-32 (LWIVAFGFFMQTLDTTIVNTA), 49-69 (SVIVSYVLTVAVMLPASGWLA), 72-92 (IGVKWVFFSAIILFTFGSLMC), 138-158 (FVTLPGQIGPLVGPALGGFLV), 165-185 (WIFLINLPVGVIGALATLLLM), 195-215 (FDISGFIMLAIGMATLTLALD), 219-239 (GLGLSPLAIAGLILCGVIALG), 267-287 (LVGSMSARIGSGMLPFMTPIF), 290-310 (IGLGFSPFHAGLMMIPMIIGS), 329-351 (VLVNATLLLAVVSLSLPLVAIMG), 393-413 (LLSMAMQLSMSIGVSTAGILL), and 430-450 (SAFLYSYLCMAIIIALPALIF).

Belongs to the major facilitator superfamily. TCR/Tet family.

The protein resides in the cell inner membrane. The protein is Putative multidrug resistance protein MdtD of Yersinia pseudotuberculosis serotype I (strain IP32953).